The sequence spans 490 residues: Limb region 1 protein (490 aa).

Over 1–19 (MEGQDEVSAREQHFHSQVR) the chain is Extracellular. A helical transmembrane segment spans residues 20–40 (ESTICFLLFAILYIVSYFIII). Residues 41 to 62 (RYKRKSDEQEDEDAVVNRISLF) are Cytoplasmic-facing. A helical membrane pass occupies residues 63–83 (LSTFTLAVSAGAVLLLPFSII). Topologically, residues 84–110 (SNEILLAFPHNYYIQWLNGSLIHGLWN) are extracellular. A helical membrane pass occupies residues 111–131 (LASLFSNLCLFVLMPFAFFFL). The Cytoplasmic portion of the chain corresponds to 132-151 (ESEGFAGLKKGIRARILETL). The helical transmembrane segment at 152–172 (VMLLLLALLILGMVWVASALI) threads the bilayer. The Extracellular portion of the chain corresponds to 173 to 187 (DSDAASMESLYDLWE). A helical membrane pass occupies residues 188 to 208 (FYLPYLYSCISLMGCLLLLLC). The Cytoplasmic segment spans residues 209-291 (TPVGLSRMFT…RKKASAWERN (83 aa)). Residues 256 to 287 (SSVEYNVMELEQELENVKILKTKLERRKKASA) adopt a coiled-coil conformation. The chain crosses the membrane as a helical span at residues 292-312 (LVYPAVMVLLLIETSISVLLV). At 313–339 (ACNILCLLVDETAMPKGTRGPGIGSAS) the chain is on the extracellular side. The chain crosses the membrane as a helical span at residues 340-360 (LSTFGFVGAALEIILIFYLMV). The Cytoplasmic portion of the chain corresponds to 361–383 (SSVVGFYSLRFFGNFTPKKDDTT). A helical transmembrane segment spans residues 384 to 404 (MTKIIGNCVSILVLSSALPVM). Topologically, residues 405-426 (SRTLGITRFDLLGDFGRFNWLG) are extracellular. A helical transmembrane segment spans residues 427 to 447 (NFYIVLSYNLLFAIMTTLCLI). Residues 448–490 (RKFTSAVREELFKALGLHKLHLSDTSRDSETTKPSANGHQKAL) lie on the Cytoplasmic side of the membrane.

The protein belongs to the LIMR family.

It localises to the membrane. In terms of biological role, putative membrane receptor. The polypeptide is Limb region 1 protein (Lmbr1) (Mus musculus (Mouse)).